A 238-amino-acid polypeptide reads, in one-letter code: CS1 fimbrial subunit B (238 aa).

The N-terminal stretch at 1–17 (MRKLFLSLLMIPFVAKA) is a signal peptide.

Its subcellular location is the fimbrium. Might function as a shuttle protein in the transport of fimbria through the periplasmic space or might function as an adhesin. The protein is CS1 fimbrial subunit B (csoB) of Escherichia coli.